Reading from the N-terminus, the 327-residue chain is tRNA uridine(34) hydroxylase (327 aa).

The Rhodanese domain maps to Gln-122–Trp-218. Cys-178 functions as the Cysteine persulfide intermediate in the catalytic mechanism.

The protein belongs to the TrhO family.

The enzyme catalyses uridine(34) in tRNA + AH2 + O2 = 5-hydroxyuridine(34) in tRNA + A + H2O. Catalyzes oxygen-dependent 5-hydroxyuridine (ho5U) modification at position 34 in tRNAs. This Chlamydia trachomatis serovar A (strain ATCC VR-571B / DSM 19440 / HAR-13) protein is tRNA uridine(34) hydroxylase.